The chain runs to 418 residues: Glucose-1-phosphate adenylyltransferase (418 aa).

Alpha-D-glucose 1-phosphate-binding positions include Tyr-104, Gly-169, 184 to 185, and Ser-202; that span reads EK.

This sequence belongs to the bacterial/plant glucose-1-phosphate adenylyltransferase family. As to quaternary structure, homotetramer.

It catalyses the reaction alpha-D-glucose 1-phosphate + ATP + H(+) = ADP-alpha-D-glucose + diphosphate. It participates in glycan biosynthesis; glycogen biosynthesis. Involved in the biosynthesis of ADP-glucose, a building block required for the elongation reactions to produce glycogen. Catalyzes the reaction between ATP and alpha-D-glucose 1-phosphate (G1P) to produce pyrophosphate and ADP-Glc. This is Glucose-1-phosphate adenylyltransferase from Jannaschia sp. (strain CCS1).